The following is a 203-amino-acid chain: uncharacterized protein (203 aa).

This is an uncharacterized protein from Caldicellulosiruptor sp. (strain Rt8B.4).